We begin with the raw amino-acid sequence, 125 residues long: Prefoldin subunit beta (125 aa).

This sequence belongs to the prefoldin subunit beta family. In terms of assembly, heterohexamer of two alpha and four beta subunits.

It localises to the cytoplasm. Functionally, molecular chaperone capable of stabilizing a range of proteins. Seems to fulfill an ATP-independent, HSP70-like function in archaeal de novo protein folding. The protein is Prefoldin subunit beta (pfdB) of Sulfurisphaera tokodaii (strain DSM 16993 / JCM 10545 / NBRC 100140 / 7) (Sulfolobus tokodaii).